Consider the following 2682-residue polypeptide: 3-methylorcinaldehyde synthase (2682 aa).

An N-terminal acylcarrier protein transacylase domain (SAT) region spans residues 111–272; sequence LIPLVVIEQL…TEITLYGAFH (162 aa). The active-site Nucleophile; for transacylase activity is the C154. The active-site Proton donor/acceptor; for transacylase activity is the H272. A Ketosynthase family 3 (KS3) domain is found at 401–826; it reads ESDIAVIGMA…GSNASMIVMQ (426 aa). Residues C573, H708, and H749 each act as for beta-ketoacyl synthase activity in the active site. The malonyl-CoA:ACP transacylase (MAT) domain stretch occupies residues 947-1237; sequence FGGQVSTHIG…ITAMTSRALD (291 aa). Positions 1339-1468 are N-terminal hotdog fold; sequence LTFVGFQDSS…GKIKFTNARD (130 aa). Residues 1339-1651 enclose the PKS/mFAS DH domain; that stretch reads LTFVGFQDSS…YVKIPKLSMQ (313 aa). The interval 1367–1649 is product template (PT) domain; the sequence is LLLGHMTIQT…IAYVKIPKLS (283 aa). Residue H1371 is the Proton acceptor; for dehydratase activity of the active site. The segment at 1496 to 1651 is C-terminal hotdog fold; it reads VDEVLANRSI…YVKIPKLSMQ (156 aa). Residue D1555 is the Proton donor; for dehydratase activity of the active site. The 75-residue stretch at 1723 to 1797 folds into the Carrier domain; sequence ENITERVKAV…DLMKVVTGVV (75 aa). S1757 carries the O-(pantetheine 4'-phosphoryl)serine modification. Positions 2021 to 2211 are methyltransferase domain; that stretch reads EWPLNQVMYT…AGYGHVYWTE (191 aa). The interval 2303–2548 is NADPH-binding (R) domain; it reads VTGATGGLGA…LGWTPADAIA (246 aa).

Its pathway is secondary metabolite biosynthesis; terpenoid biosynthesis. Its function is as follows. Non-reducing polyketide synthase; part of the gene cluster that mediates the biosynthesis of eupenifeldin, a bistropolone meroterpenoid that acts as an antitumor agent. The first step of eupenifeldin biosynthesis is the biosynthesis of 3-methylorcinaldehyde performed by the non-reducing polyketide synthase eupA. Oxidative dearomatization of 3-methylorcinaldehyde likely catalyzed by the FAD-dependent monooxygenase eupB is followed by oxidative ring expansion by the 2-oxoglutarate-dependent dioxygenase eupC to provide the first tropolone metabolite, tropolone stipitaldehyde. In parallel, generation of sesquiterpene alpha-humulene from farnesylpyrophosphate (FPP) is catalyzed by the terpene cyclase eupE. The cytochrome P450 monooxygenase eupD then hydroxylates humulene to humulenol. The putative Diels-Alderase eupF probably catalyzes the formation of the tropolone-humulene skeleton by linking humulenol and the polyketide moiety. The short-chain dehydrogenase/reductase eupG and the flavin-dependent monooxygenase eupH are also essential for eupenifeldin biosynthesis and are likely the additional decorating enzymes of the tropolone-humulene skeleton to produce final eupenifeldin or derivatives. This Phoma sp protein is 3-methylorcinaldehyde synthase.